The chain runs to 121 residues: Large ribosomal subunit protein uL18 (121 aa).

The protein belongs to the universal ribosomal protein uL18 family. In terms of assembly, part of the 50S ribosomal subunit; part of the 5S rRNA/L5/L18/L25 subcomplex. Contacts the 5S and 23S rRNAs.

Its function is as follows. This is one of the proteins that bind and probably mediate the attachment of the 5S RNA into the large ribosomal subunit, where it forms part of the central protuberance. This is Large ribosomal subunit protein uL18 from Polaromonas naphthalenivorans (strain CJ2).